The following is a 335-amino-acid chain: MSLLQPMRDMAAKMKTLCFKIMNFEHLDGSYTSESKLENGGHWAVRFVSSKTAKSTKRRLSVYLVCFPATDNPEWSISTSFAFRFLNSWGNSKTKISPLCTHTFTAKDNSKGASGFCAWDDIVTPNSGFLVNGVFTIEFDLSISRTTGYQIEKKDHTSFLADGKLIVEDQTIDVCLALLADNSPVLYDMIYNENPGQTEFEIFDFTYDSILGMVSILQLDEFKVNVRNYRDLLELGQRYQIVAVMDQCEEFLLRTKKVSIETKLKLSETFQLHFLQFRTIERIQCMERLEAILDENIDIEDKTYEALLEKMKQLKSQEEKESCSCKKKHCGRSRV.

An MATH domain is found at 14 to 141 (MKTLCFKIMN…NGVFTIEFDL (128 aa)). Residues 161-226 (ADGKLIVEDQ…LQLDEFKVNV (66 aa)) form the BTB domain.

In Caenorhabditis briggsae, this protein is BTB and MATH domain-containing protein 39.